Here is a 572-residue protein sequence, read N- to C-terminus: Urease subunit alpha (572 aa).

The Urease domain maps to 134-572 (AGIDTHIHLI…AAMNQLYFFG (439 aa)). Ni(2+) is bound by residues His-139, His-141, and Lys-222. Lys-222 bears the N6-carboxylysine mark. Residue His-224 coordinates substrate. Positions 251 and 277 each coordinate Ni(2+). Catalysis depends on His-325, which acts as the Proton donor. Asp-365 lines the Ni(2+) pocket.

Belongs to the metallo-dependent hydrolases superfamily. Urease alpha subunit family. As to quaternary structure, heterotrimer of UreA (gamma), UreB (beta) and UreC (alpha) subunits. Three heterotrimers associate to form the active enzyme. It depends on Ni cation as a cofactor. Carboxylation allows a single lysine to coordinate two nickel ions.

It is found in the cytoplasm. It catalyses the reaction urea + 2 H2O + H(+) = hydrogencarbonate + 2 NH4(+). Its pathway is nitrogen metabolism; urea degradation; CO(2) and NH(3) from urea (urease route): step 1/1. This is Urease subunit alpha from Edwardsiella ictaluri (strain 93-146).